The primary structure comprises 607 residues: UvrABC system protein C (607 aa).

A GIY-YIG domain is found at 16–94 (GRPGVYRMFD…IKEWRPPYNI (79 aa)). The region spanning 203-238 (NALSDELNASMEKAAMALDFERAAELRDQVALLRRV) is the UVR domain.

Belongs to the UvrC family. In terms of assembly, interacts with UvrB in an incision complex.

It localises to the cytoplasm. Its function is as follows. The UvrABC repair system catalyzes the recognition and processing of DNA lesions. UvrC both incises the 5' and 3' sides of the lesion. The N-terminal half is responsible for the 3' incision and the C-terminal half is responsible for the 5' incision. This is UvrABC system protein C from Pseudomonas syringae pv. syringae (strain B728a).